The following is a 58-amino-acid chain: Photosystem II reaction center protein K (58 aa).

A propeptide spanning residues 1–21 (MLVISNVYPSNLFTLINPFFA) is cleaved from the precursor. Residues 29–49 (IFDPIVDVMPIIPVFFFLLAF) form a helical membrane-spanning segment.

Belongs to the PsbK family. As to quaternary structure, PSII is composed of 1 copy each of membrane proteins PsbA, PsbB, PsbC, PsbD, PsbE, PsbF, PsbH, PsbI, PsbJ, PsbK, PsbL, PsbM, PsbT, PsbX, PsbY, PsbZ, Psb30/Ycf12, at least 3 peripheral proteins of the oxygen-evolving complex and a large number of cofactors. It forms dimeric complexes.

The protein resides in the plastid. The protein localises to the chloroplast thylakoid membrane. One of the components of the core complex of photosystem II (PSII). PSII is a light-driven water:plastoquinone oxidoreductase that uses light energy to abstract electrons from H(2)O, generating O(2) and a proton gradient subsequently used for ATP formation. It consists of a core antenna complex that captures photons, and an electron transfer chain that converts photonic excitation into a charge separation. The protein is Photosystem II reaction center protein K of Psilotum nudum (Whisk fern).